Consider the following 917-residue polypeptide: Isoleucine--tRNA ligase (917 aa).

Residues Pro56, His67, Glu554, Gly555, Asp557, Gln558, and His585 each contribute to the L-isoleucyl-5'-AMP site. The short motif at 57-67 (PYANGNLHMGH) is the 'HIGH' region element. The 'KMSKS' region motif lies at 595–599 (KMSKS). Position 598 (Lys598) interacts with ATP. TRNA(Ile) is bound by residues Arg632 and Gln640. Residues Cys886, Cys889, Cys906, and Cys909 each coordinate Zn(2+).

This sequence belongs to the class-I aminoacyl-tRNA synthetase family. IleS type 1 subfamily. Monomer. The cofactor is Zn(2+).

It is found in the cytoplasm. It carries out the reaction tRNA(Ile) + L-isoleucine + ATP = L-isoleucyl-tRNA(Ile) + AMP + diphosphate. Its function is as follows. Catalyzes the attachment of isoleucine to tRNA(Ile). As IleRS can inadvertently accommodate and process structurally similar amino acids such as valine, to avoid such errors it has two additional distinct tRNA(Ile)-dependent editing activities. One activity is designated as 'pretransfer' editing and involves the hydrolysis of activated Val-AMP. The other activity is designated 'posttransfer' editing and involves deacylation of mischarged Val-tRNA(Ile). The sequence is that of Isoleucine--tRNA ligase (ileS) from Staphylococcus aureus.